Reading from the N-terminus, the 174-residue chain is Small heat shock protein OV25-1 (174 aa).

The sHSP domain occupies 50–161 (LNECNIGNTL…ASRNIPIRAS (112 aa)). Residues 153–174 (SRNIPIRASPKEPEAKQKTKKQ) are disordered. A compositionally biased stretch (basic and acidic residues) spans 161-174 (SPKEPEAKQKTKKQ).

The protein belongs to the small heat shock protein (HSP20) family.

This Onchocerca volvulus protein is Small heat shock protein OV25-1 (OV25-1).